Consider the following 160-residue polypeptide: Heme transporter hrg-5 (160 aa).

The helical transmembrane segment at 21–41 (IALTILDILIGFSNILSYAIQ) threads the bilayer. Asn44 carries N-linked (GlcNAc...) asparagine glycosylation. The next 3 membrane-spanning stretches (helical) occupy residues 47–67 (ALTLTAMVTLVACHTLQMFLA), 89–109 (ITLGFLALGCFVVCFIIAGVT), and 123–142 (FTGLWATAITKYTWQNALLA). N-linked (GlcNAc...) asparagine glycosylation occurs at Asn144.

The protein belongs to the HRG family.

The protein localises to the membrane. Functionally, heme transporter. The sequence is that of Heme transporter hrg-5 (hrg-5) from Caenorhabditis elegans.